Here is a 419-residue protein sequence, read N- to C-terminus: Creatine kinase S-type, mitochondrial (419 aa).

A mitochondrion-targeting transit peptide spans 1–39; the sequence is MAGTFGRLLAGRVTAALFAAAGSGVLTTGYLLNQQNVKA. The Phosphagen kinase N-terminal domain occupies 46–132; it reads KLFPPSADYP…FDPVIKARHN (87 aa). One can recognise a Phosphagen kinase C-terminal domain in the interval 159–401; the sequence is YVLSSRVRTG…NYLVDCEKKL (243 aa). Residues 162–166, H225, R270, R326, 354–359, and D369 each bind ATP; these read SSRVR and RGTGGV.

It belongs to the ATP:guanido phosphotransferase family. Exists as an octamer composed of four MTCK homodimers. As to expression, expressed in the leg muscle and heart.

The protein localises to the mitochondrion inner membrane. The catalysed reaction is creatine + ATP = N-phosphocreatine + ADP + H(+). Functionally, reversibly catalyzes the transfer of phosphate between ATP and various phosphogens (e.g. creatine phosphate). Creatine kinase isoenzymes play a central role in energy transduction in tissues with large, fluctuating energy demands, such as skeletal muscle, heart, brain and spermatozoa. This chain is Creatine kinase S-type, mitochondrial (CKMT2), found in Gallus gallus (Chicken).